The primary structure comprises 651 residues: DNA endonuclease RBBP8 (651 aa).

Coiled-coil stretches lie at residues 35 to 84 and 117 to 138; these read LQEL…EDRL and ISEL…SLEL. Disordered regions lie at residues 138–199, 363–433, and 487–539; these read LERL…PESR, NGRL…EHQA, and YESC…SDKS. Over residues 363–379 the composition is skewed to polar residues; the sequence is NGRLQSKNQETSEIETT. Residues 380–391 are compositionally biased toward basic and acidic residues; sequence QDSKKKCLDGHT. Over residues 503–515 the composition is skewed to acidic residues; it reads VYEEEREEDDPEE. Residues 525-539 show a composition bias toward basic and acidic residues; sequence RPADRKPLVSDSDKS. Thr-599 and Thr-611 each carry phosphothreonine.

The protein belongs to the COM1/SAE2/CtIP family. As to quaternary structure, homotetramer; formed by antiparallel association of helical extensions protruding from the N-termini of two parallel coiled-coil dimers. Interacts with the MRN complex; the interaction links DNA sensing to resection. Interacts with samhd1. Post-translationally, phosphorylation at Thr-599 and Thr-611 promote interaction with nbn and recruitment to double-strand breaks (DSBs).

The protein resides in the nucleus. It is found in the chromosome. Endonuclease that cooperates with the MRE11-RAD50-NBN (MRN) complex in DNA-end resection, the first step of double-strand break (DSB) repair through the homologous recombination (HR) pathway. Functions downstream of the MRN complex and ATM, promotes ATR activation and its recruitment to DSBs in the S/G2 phase facilitating the generation of ssDNA. Specifically promotes the endonuclease activity of the MRN complex to clear DNA ends containing protein adducts: recruited to DSBs by nbn following phosphorylation, and promotes the endonuclease of mre11 to clear protein-DNA adducts and generate clean double-strand break ends. The chain is DNA endonuclease RBBP8 (rbbp8) from Danio rerio (Zebrafish).